The chain runs to 416 residues: Probable 26S proteasome regulatory subunit rpn-6.2 (416 aa).

The region spanning 217-386 (YKTSFSYFYE…DTVVVYPKAD (170 aa)) is the PCI domain.

The protein belongs to the proteasome subunit S9 family. Component of the lid subcomplex of the 19S proteasome regulatory particle complex (also named PA700 complex). The 26S proteasome consists of a 20S proteasome core and two 19S regulatory subunits.

In terms of biological role, component of the lid subcomplex of the 26S proteasome, a multiprotein complex involved in the ATP-dependent degradation of ubiquitinated proteins. In the complex, rpn-6.2 is required for proteasome assembly. The chain is Probable 26S proteasome regulatory subunit rpn-6.2 (rpn-6.2) from Caenorhabditis elegans.